The chain runs to 500 residues: Pyridine nucleotide-disulfide oxidoreductase domain-containing protein 1 (500 aa).

Position 1 is an N-acetylmethionine (Met-1). Residues 211 to 235 (TRYTTEGRKKEARSKSKADNVGSAL) are disordered. Basic and acidic residues predominate over residues 213 to 228 (YTTEGRKKEARSKSKA).

Belongs to the class-I pyridine nucleotide-disulfide oxidoreductase family. PYROXD1 subfamily. It depends on FAD as a cofactor.

It is found in the nucleus. The protein resides in the cytoplasm. It localises to the myofibril. Its subcellular location is the sarcomere. In terms of biological role, probable FAD-dependent oxidoreductase; involved in the cellular oxidative stress response. Required for normal sarcomere structure and muscle fiber integrity. In Homo sapiens (Human), this protein is Pyridine nucleotide-disulfide oxidoreductase domain-containing protein 1 (PYROXD1).